The sequence spans 209 residues: MRVLAKRTETRQLEVLKYIYEQVELKGYPPTVREIGKAVDLSSTSTVHGHLARLEKKGLILRDPTKPRAIELTPEGLEKIGIQPTTIPMLGVVTAGEPILAVEEASDFFPLPPDLRTEENALFMLTIRGESMINAGILDGDQVIVRKQSNANNGDIVIAMTDEDEATCKRFFREVDHIRLQPENDALAPILLDNVTILGKVVGLYRNHI.

The segment at residues 32 to 52 is a DNA-binding region (H-T-H motif); the sequence is VREIGKAVDLSSTSTVHGHLA. Catalysis depends on for autocatalytic cleavage activity residues serine 131 and lysine 169.

Belongs to the peptidase S24 family. In terms of assembly, homodimer.

It catalyses the reaction Hydrolysis of Ala-|-Gly bond in repressor LexA.. In terms of biological role, represses a number of genes involved in the response to DNA damage (SOS response), including recA and lexA. In the presence of single-stranded DNA, RecA interacts with LexA causing an autocatalytic cleavage which disrupts the DNA-binding part of LexA, leading to derepression of the SOS regulon and eventually DNA repair. This is LexA repressor from Enterococcus faecalis (strain ATCC 700802 / V583).